The following is a 365-amino-acid chain: Aminomethyltransferase (365 aa).

This sequence belongs to the GcvT family. The glycine cleavage system is composed of four proteins: P, T, L and H.

It carries out the reaction N(6)-[(R)-S(8)-aminomethyldihydrolipoyl]-L-lysyl-[protein] + (6S)-5,6,7,8-tetrahydrofolate = N(6)-[(R)-dihydrolipoyl]-L-lysyl-[protein] + (6R)-5,10-methylene-5,6,7,8-tetrahydrofolate + NH4(+). In terms of biological role, the glycine cleavage system catalyzes the degradation of glycine. In Chlorobium phaeovibrioides (strain DSM 265 / 1930) (Prosthecochloris vibrioformis (strain DSM 265)), this protein is Aminomethyltransferase.